The chain runs to 280 residues: Band 7 protein AGAP004871 (280 aa).

A helical membrane pass occupies residues 23-43 (ILIFLSWVLVVLTMPFSLLVC).

It belongs to the band 7/mec-2 family.

Its subcellular location is the membrane. This chain is Band 7 protein AGAP004871, found in Anopheles gambiae (African malaria mosquito).